The chain runs to 143 residues: Myocilin opposite strand protein (143 aa).

The interval 65–111 (MATRDETITKKSGEGEEMLPSMGMDHESPSKAHLMVPPAPPPSPADA) is disordered. Residues 66 to 78 (ATRDETITKKSGE) show a composition bias toward basic and acidic residues.

The chain is Myocilin opposite strand protein from Mus musculus (Mouse).